A 110-amino-acid polypeptide reads, in one-letter code: Large ribosomal subunit protein eL30 (110 aa).

Belongs to the eukaryotic ribosomal protein eL30 family.

The protein is Large ribosomal subunit protein eL30 (rpl30e) of Methanocaldococcus jannaschii (strain ATCC 43067 / DSM 2661 / JAL-1 / JCM 10045 / NBRC 100440) (Methanococcus jannaschii).